The following is a 62-amino-acid chain: uncharacterized protein (62 aa).

Positions 1 to 19 are cleaved as a signal peptide; it reads MKLIILLFVVAAFVTLAMG.

This is an uncharacterized protein from Lepidoptera (butterflies and moths).